The chain runs to 124 residues: uncharacterized protein (124 aa).

Residues 83 to 100 (VTCFSLYTICYRIVLIWA) form a helical membrane-spanning segment.

The protein resides in the membrane. This is an uncharacterized protein from Saccharomyces cerevisiae (strain ATCC 204508 / S288c) (Baker's yeast).